The chain runs to 421 residues: Autophagy-related protein 17 (421 aa).

It belongs to the ATG17 family. As to quaternary structure, forms a complex with ATG13, ATG29 and CIS1/ATG31. The ATG17-ATG29-ATG31 complex interacts with the ATG1-ATG13 complex. Forms a complex with SNX4 and ATG20. Interacts with ATG11.

Its subcellular location is the cytoplasm. It is found in the preautophagosomal structure membrane. Its function is as follows. Autophagy-specific protein that functions with ATG13, ATG29, and CIS1/ATG31 in response to autophagy-inducing signals as a scaffold to recruit other ATG proteins to organize pre-autophagosomal structure (PAS) formation. Modulates the timing and magnitude of the autophagy response, such as the size of the sequestering vesicles, through interacting with and regulating ATG1 kinase activity. Plays particularly a role in pexophagy and nucleophagy. With ATG13, is required for ATG1 activation by autophosphorylation. Recruits ATG9 to the pre-autophagosomal structure. This chain is Autophagy-related protein 17, found in Kluyveromyces marxianus (strain DMKU3-1042 / BCC 29191 / NBRC 104275) (Yeast).